Reading from the N-terminus, the 242-residue chain is Probable transcriptional regulatory protein Csac_0964 (242 aa).

The disordered stretch occupies residues 1 to 20 (MSGHSKWANIRHKKEKTDAQ).

Belongs to the TACO1 family.

The protein resides in the cytoplasm. This chain is Probable transcriptional regulatory protein Csac_0964, found in Caldicellulosiruptor saccharolyticus (strain ATCC 43494 / DSM 8903 / Tp8T 6331).